A 455-amino-acid chain; its full sequence is Ribulose bisphosphate carboxylase large chain (455 aa).

N6,N6,N6-trimethyllysine is present on lysine 5. Substrate is bound by residues asparagine 114 and threonine 164. The active-site Proton acceptor is the lysine 166. Lysine 168 contributes to the substrate binding site. Positions 192, 194, and 195 each coordinate Mg(2+). Lysine 192 bears the N6-carboxylysine mark. The active-site Proton acceptor is histidine 285. Residues arginine 286, histidine 318, and serine 370 each contribute to the substrate site.

It belongs to the RuBisCO large chain family. Type I subfamily. In terms of assembly, heterohexadecamer of 8 large chains and 8 small chains; disulfide-linked. The disulfide link is formed within the large subunit homodimers. The cofactor is Mg(2+). Post-translationally, the disulfide bond which can form in the large chain dimeric partners within the hexadecamer appears to be associated with oxidative stress and protein turnover.

Its subcellular location is the plastid. It is found in the chloroplast. The catalysed reaction is 2 (2R)-3-phosphoglycerate + 2 H(+) = D-ribulose 1,5-bisphosphate + CO2 + H2O. It catalyses the reaction D-ribulose 1,5-bisphosphate + O2 = 2-phosphoglycolate + (2R)-3-phosphoglycerate + 2 H(+). In terms of biological role, ruBisCO catalyzes two reactions: the carboxylation of D-ribulose 1,5-bisphosphate, the primary event in carbon dioxide fixation, as well as the oxidative fragmentation of the pentose substrate in the photorespiration process. Both reactions occur simultaneously and in competition at the same active site. This chain is Ribulose bisphosphate carboxylase large chain, found in Lupinus cosentinii (West Australian blue lupine).